Reading from the N-terminus, the 1330-residue chain is MAEPRRVAFISLSPVRRREAEFPGTEREPEYPREPPRLEPQPYREPARTEPPAPREVAPRSDAQPPPREKPLPQREVSRAEPPMSLQREPPRPEPPPPPLPQLHLQPPPPRESTSRAEPQPRPPRETVRLELVLKDPTDESCVEFSYPELLLCGEQRKKPVYTEDPFNDDHQERQEVEMLAKKFEMKYGGKPRKHRRDRLQDLIDIGFGYDETDPFIDNSEAYDELVPASLTTKYGGFYINTGTLQFRQASDTEEDDTTDNQKHKPPKIPKIKEDDIEMKKRKRKEEGEKEKKPRKKVPKQLGVMALNSHKSEKKKKRYKDSLSLAAMIRKFQKEKDALKKESNPKTPLNFSTSSLNKPPSAAVALGNDVSDLNLTSADPDLPIFVSTNEHELFQEAENALEMLDDFDFDRLLDAASNGSPLSESGGENGNTTQPTYASQVMPKVVPTLPEGLPVLLEKRIEDLRVAAKLFDEEGRKKFFTQDMNNILLDIELQLQELGPVIRSGVYSHLEAFVPCNKETLVKRLKKLHLNVQDDRLREPLQKLKLAVSNVMPEQLFKYQEDCQARNQAKCAKFQTDEEREKNGSEEDDEEKPGKRVIGPRKKFHWDDTIRTLLCNLVEIKLGCYELEPNKSQSAEDYLKSFMETEVKPLWPKGWMQARMLFKESRSVHNHLTSAPAKKKVIPAPKPKVKECSPKKDQKTPASSVASVGGPSTSSSTSAVASTSSGSTPVQETICLDDSLDEELSFHPPALDLVSEALAVINNGNKGPPAGSRISMPTAKPRPGLREEKLASIMSKLPLATPKKLDSTQTAHSSSLIAGHTGPVPKKPQDLAHTGISSGLIAGSSIQNPKVSLEPLPARLLQQGLQRSSQIHASSSSQTHVSSSSQAQVAASSHTLGTSEAQDASPLTQVTKVHQHSAVQQNYVSPLQATISKSQTNPVVKLSNNPQLSCSSPLTKTSDKPLMYRLPLSTPPPGNGSQGSHSLVSRTVPSTTTSTNYLAKAMVSQISTQGFKSPFSMAASPKLASSPKPATSPKPLPSPKPSASPKPSQSAKPSVSTKLISKSNPTPKPTVSPSSSSPNALVAQSSHSSSNNPVHKQPSGMNISRQSPTLNLLPLNRTSGLPSTKNLQAPSKLTNSPSTGTVGKNSLSGIAMNVPASRGSNLNSSGANRTSLSGGTGSGTQGATKPLSTPHRPSSASGSSVVAASVQSTAGASLLANASPLTLMTSPLSVTNQNVTPFGMLGGLVPVTMPFQFPLELLGFGTDTAGVTTTSGSTSAAFHHSLTQNLLKGLQPGAQHAAALSHAPLPTHVQQTFNDGGQSKGDTKLPRKSQ.

The disordered stretch occupies residues 1 to 133 (MAEPRRVAFI…PRETVRLELV (133 aa)). A Phosphoserine modification is found at Ser13. 2 stretches are compositionally biased toward basic and acidic residues: residues 16–37 (RRRE…EPPR) and 67–79 (PREK…EVSR). The span at 93 to 111 (PEPPPPPLPQLHLQPPPPR) shows a compositional bias: pro residues. The span at 123–133 (PPRETVRLELV) shows a compositional bias: basic and acidic residues. Residue Thr244 is modified to Phosphothreonine. Residues 249 to 304 (QASDTEEDDTTDNQKHKPPKIPKIKEDDIEMKKRKRKEEGEKEKKPRKKVPKQLGV) form a disordered region. Phosphoserine is present on Ser251. Position 253 is a phosphothreonine (Thr253). Lys273 participates in a covalent cross-link: Glycyl lysine isopeptide (Lys-Gly) (interchain with G-Cter in SUMO2). Ser312 is subject to Phosphoserine. The interval 336 to 356 (KDALKKESNPKTPLNFSTSSL) is disordered. The segment covering 345-356 (PKTPLNFSTSSL) has biased composition (polar residues). Residues Ser417, Ser420, Ser423, and Ser585 each carry the phosphoserine modification. 7 disordered regions span residues 574-597 (FQTD…GKRV), 672-730 (LTSA…STPV), 802-833 (PKKL…DLAH), 864-913 (GLQR…VTKV), 938-988 (PVVK…SRTV), 1017-1201 (MAAS…GSSV), and 1308-1330 (HVQQ…RKSQ). Composition is skewed to basic and acidic residues over residues 575–585 (QTDEEREKNGS) and 688–699 (KVKECSPKKDQK). Residues 701-730 (PASSVASVGGPSTSSSTSAVASTSSGSTPV) show a composition bias toward low complexity. The segment covering 807–816 (STQTAHSSSL) has biased composition (polar residues). Positions 864 to 895 (GLQRSSQIHASSSSQTHVSSSSQAQVAASSHT) are enriched in low complexity. Polar residues-rich tracts occupy residues 896-913 (LGTS…VTKV) and 938-956 (PVVK…PLTK). Over residues 1017-1029 (MAASPKLASSPKP) the composition is skewed to low complexity. The span at 1030–1044 (ATSPKPLPSPKPSAS) shows a compositional bias: pro residues. 2 stretches are compositionally biased toward low complexity: residues 1045–1054 (PKPSQSAKPS) and 1061–1079 (SKSN…SSPN). An N6-acetyllysine modification is found at Lys1052. 3 stretches are compositionally biased toward polar residues: residues 1082–1148 (VAQS…NSLS), 1158–1169 (RGSNLNSSGANR), and 1308–1317 (HVQQTFNDGG). Residue Ser1107 is modified to Phosphoserine. The residue at position 1132 (Lys1132) is an N6-acetyllysine. Residues 1321–1330 (GDTKLPRKSQ) are compositionally biased toward basic and acidic residues.

The protein belongs to the ubinuclein family.

The chain is Ubinuclein-2 (UBN2) from Bos taurus (Bovine).